Consider the following 470-residue polypeptide: Alpha-galactosidase (470 aa).

The N-terminal stretch at M1 to G18 is a signal peptide. A disulfide bridge connects residues C42 and C74. Residue N43 is glycosylated (N-linked (GlcNAc...) asparagine). D72 and D73 together coordinate substrate. Residue N82 is glycosylated (N-linked (GlcNAc...) asparagine). C121 and C151 are joined by a disulfide. Substrate is bound at residue K147. D149 (nucleophile) is an active-site residue. The N-linked (GlcNAc...) asparagine glycan is linked to N175. R205 is a binding site for substrate. D209 functions as the Proton donor in the catalytic mechanism. 2 cysteine pairs are disulfide-bonded: C221-C237 and C223-C230. Q251 contacts substrate. N-linked (GlcNAc...) asparagine glycans are attached at residues N270, N388, N413, N422, N435, and N454.

The protein belongs to the glycosyl hydrolase 27 family. In terms of assembly, homotetramer.

The protein resides in the secreted. The enzyme catalyses Hydrolysis of terminal, non-reducing alpha-D-galactose residues in alpha-D-galactosides, including galactose oligosaccharides, galactomannans and galactolipids.. This chain is Alpha-galactosidase (MEL), found in Zygotorulaspora mrakii (Zygosaccharomyces mrakii).